We begin with the raw amino-acid sequence, 77 residues long: Translation initiation factor IF-1, chloroplastic (77 aa).

In terms of domain architecture, S1-like spans 1 to 72; the sequence is MRKQNLIEME…TKGRITYRLR (72 aa).

Belongs to the IF-1 family. Component of the 30S ribosomal translation pre-initiation complex which assembles on the 30S ribosome in the order IF-2 and IF-3, IF-1 and N-formylmethionyl-tRNA(fMet); mRNA recruitment can occur at any time during PIC assembly.

The protein resides in the plastid. Its subcellular location is the chloroplast. Functionally, one of the essential components for the initiation of protein synthesis. Stabilizes the binding of IF-2 and IF-3 on the 30S subunit to which N-formylmethionyl-tRNA(fMet) subsequently binds. Helps modulate mRNA selection, yielding the 30S pre-initiation complex (PIC). Upon addition of the 50S ribosomal subunit IF-1, IF-2 and IF-3 are released leaving the mature 70S translation initiation complex. This chain is Translation initiation factor IF-1, chloroplastic, found in Staurastrum punctulatum (Green alga).